A 205-amino-acid chain; its full sequence is UPF0688 protein C1orf174 homolog (205 aa).

The span at 1–18 (MRKRKLSDRVRCSARLKN) shows a compositional bias: basic residues. Disordered stretches follow at residues 1–128 (MRKR…PSKV) and 184–205 (AKEE…EGNI). Residues 46–63 (NTDKKSPKKLENDEKGLM) are compositionally biased toward basic and acidic residues. A compositionally biased stretch (polar residues) spans 71 to 108 (INKTDNTASNESNAGNVNTCPSASPFSDLNEVSRNGLT). Residues 187 to 196 (EEEDDDDDYA) show a composition bias toward acidic residues.

This sequence belongs to the UPF0688 family.

The protein localises to the nucleus. The polypeptide is UPF0688 protein C1orf174 homolog (Xenopus laevis (African clawed frog)).